We begin with the raw amino-acid sequence, 401 residues long: Tryptophan synthase beta chain (401 aa).

The residue at position 91 (Lys-91) is an N6-(pyridoxal phosphate)lysine.

This sequence belongs to the TrpB family. In terms of assembly, tetramer of two alpha and two beta chains. Pyridoxal 5'-phosphate serves as cofactor.

It carries out the reaction (1S,2R)-1-C-(indol-3-yl)glycerol 3-phosphate + L-serine = D-glyceraldehyde 3-phosphate + L-tryptophan + H2O. It functions in the pathway amino-acid biosynthesis; L-tryptophan biosynthesis; L-tryptophan from chorismate: step 5/5. In terms of biological role, the beta subunit is responsible for the synthesis of L-tryptophan from indole and L-serine. This Lactococcus lactis subsp. cremoris (strain MG1363) protein is Tryptophan synthase beta chain.